Consider the following 140-residue polypeptide: Protein S40-1 (140 aa).

Positions tyrosine 16–serine 58 are disordered. Basic and acidic residues predominate over residues arginine 20 to tryptophan 44.

It belongs to the senescence regulator S40 family.

Its subcellular location is the cytoplasm. The polypeptide is Protein S40-1 (Arabidopsis thaliana (Mouse-ear cress)).